Here is a 365-residue protein sequence, read N- to C-terminus: 3-isopropylmalate dehydrogenase (365 aa).

80-91 is an NAD(+) binding site; that stretch reads GPKWGTGEVRPE. The substrate site is built by arginine 98, arginine 108, arginine 137, and aspartate 226. Residues aspartate 226, aspartate 251, and aspartate 255 each coordinate Mg(2+). 290-301 is a binding site for NAD(+); that stretch reads GSAPDLPKNKVN.

The protein belongs to the isocitrate and isopropylmalate dehydrogenases family. Homodimer. The cofactor is Mg(2+). Requires Mn(2+) as cofactor.

It localises to the cytoplasm. It catalyses the reaction (2R,3S)-3-isopropylmalate + NAD(+) = 4-methyl-2-oxopentanoate + CO2 + NADH. It functions in the pathway amino-acid biosynthesis; L-leucine biosynthesis; L-leucine from 3-methyl-2-oxobutanoate: step 3/4. In terms of biological role, catalyzes the oxidation of 3-carboxy-2-hydroxy-4-methylpentanoate (3-isopropylmalate) to 3-carboxy-4-methyl-2-oxopentanoate. The product decarboxylates to 4-methyl-2 oxopentanoate. The polypeptide is 3-isopropylmalate dehydrogenase (LEU2) (Candida boidinii (Yeast)).